Consider the following 196-residue polypeptide: Ribonuclease HII (196 aa).

An RNase H type-2 domain is found at Leu-13–Phe-196. A divalent metal cation is bound by residues Asp-19, Glu-20, and Asp-111.

It belongs to the RNase HII family. It depends on Mn(2+) as a cofactor. The cofactor is Mg(2+).

The protein resides in the cytoplasm. It carries out the reaction Endonucleolytic cleavage to 5'-phosphomonoester.. Functionally, endonuclease that specifically degrades the RNA of RNA-DNA hybrids. The sequence is that of Ribonuclease HII (rnhB) from Aquifex aeolicus (strain VF5).